Reading from the N-terminus, the 423-residue chain is Glutamate-1-semialdehyde 2,1-aminomutase (423 aa).

Residue K258 is modified to N6-(pyridoxal phosphate)lysine.

The protein belongs to the class-III pyridoxal-phosphate-dependent aminotransferase family. HemL subfamily. Pyridoxal 5'-phosphate is required as a cofactor.

The protein resides in the cytoplasm. It catalyses the reaction (S)-4-amino-5-oxopentanoate = 5-aminolevulinate. Its pathway is porphyrin-containing compound metabolism; protoporphyrin-IX biosynthesis; 5-aminolevulinate from L-glutamyl-tRNA(Glu): step 2/2. The polypeptide is Glutamate-1-semialdehyde 2,1-aminomutase (Pyrobaculum arsenaticum (strain DSM 13514 / JCM 11321 / PZ6)).